The chain runs to 248 residues: 3-deoxy-manno-octulosonate cytidylyltransferase 2 (248 aa).

The protein belongs to the KdsB family.

The protein localises to the cytoplasm. The enzyme catalyses 3-deoxy-alpha-D-manno-oct-2-ulosonate + CTP = CMP-3-deoxy-beta-D-manno-octulosonate + diphosphate. The protein operates within nucleotide-sugar biosynthesis; CMP-3-deoxy-D-manno-octulosonate biosynthesis; CMP-3-deoxy-D-manno-octulosonate from 3-deoxy-D-manno-octulosonate and CTP: step 1/1. It functions in the pathway bacterial outer membrane biogenesis; lipopolysaccharide biosynthesis. Functionally, activates KDO (a required 8-carbon sugar) for incorporation into bacterial lipopolysaccharide in Gram-negative bacteria. In Hydrogenovibrio crunogenus (strain DSM 25203 / XCL-2) (Thiomicrospira crunogena), this protein is 3-deoxy-manno-octulosonate cytidylyltransferase 2.